The primary structure comprises 512 residues: GMP synthase [glutamine-hydrolyzing] (512 aa).

In terms of domain architecture, Glutamine amidotransferase type-1 spans 7–197 (TIIVLDFGSQ…VFGVCGCSEG (191 aa)). C84 (nucleophile) is an active-site residue. Residues H171 and E173 contribute to the active site. Residues 198-387 (WNMENFIEVE…LGIPDEIVWR (190 aa)) enclose the GMPS ATP-PPase domain. 225-231 (SGGVDSS) lines the ATP pocket.

As to quaternary structure, homodimer.

It catalyses the reaction XMP + L-glutamine + ATP + H2O = GMP + L-glutamate + AMP + diphosphate + 2 H(+). Its pathway is purine metabolism; GMP biosynthesis; GMP from XMP (L-Gln route): step 1/1. Catalyzes the synthesis of GMP from XMP. The protein is GMP synthase [glutamine-hydrolyzing] of Bacillus mycoides (strain KBAB4) (Bacillus weihenstephanensis).